The sequence spans 995 residues: UPF0182 protein MMAR_1371 (995 aa).

7 helical membrane-spanning segments follow: residues 18–38 (VLILIALGVIALLLAGPRLID), 63–83 (FLVFLVAGVLVGGIVFAGLAL), 113–133 (LFGIGIPAAIGLLAGIVAQSY), 175–195 (FVAIFLAFVANVVSHYLFGGI), 210–230 (IQLVSLVGVLVLLKAVAYWLD), 259–279 (KLILMAIAVICAAAVFSAIVL), and 287–307 (IGLVLLLLSSLIVGAAWPMIV). The interval 900–948 (AATGIQPTEGGAPANVPPNNAPSPEALPGTPPSPPTAVPPAPEASVTLS) is disordered. Residues 928–941 (GTPPSPPTAVPPAP) are compositionally biased toward pro residues.

Belongs to the UPF0182 family.

It is found in the cell membrane. This chain is UPF0182 protein MMAR_1371, found in Mycobacterium marinum (strain ATCC BAA-535 / M).